The primary structure comprises 362 residues: Protein RecA (362 aa).

ATP is bound at residue 67 to 74 (GPESSGKT). Residues 337 to 356 (VADAPADSAPAPVAAVAPKA) show a composition bias toward low complexity. Residues 337-362 (VADAPADSAPAPVAAVAPKASARKSA) form a disordered region.

It belongs to the RecA family.

Its subcellular location is the cytoplasm. Its function is as follows. Can catalyze the hydrolysis of ATP in the presence of single-stranded DNA, the ATP-dependent uptake of single-stranded DNA by duplex DNA, and the ATP-dependent hybridization of homologous single-stranded DNAs. It interacts with LexA causing its activation and leading to its autocatalytic cleavage. This is Protein RecA from Clavibacter michiganensis subsp. michiganensis (strain NCPPB 382).